Consider the following 740-residue polypeptide: Copalyl diphosphate synthase 2 (740 aa).

Lys-154 contributes to the substrate binding site. Mg(2+)-binding residues include Asp-287 and Asp-289. Positions Asp-287–Asp-290 match the DXDD motif motif. A substrate-binding site is contributed by Lys-373.

It belongs to the terpene synthase family. Mg(2+) is required as a cofactor.

The enzyme catalyses (2E,6E,10E)-geranylgeranyl diphosphate = (+)-copalyl diphosphate. It participates in secondary metabolite biosynthesis; terpenoid biosynthesis. Its function is as follows. Monofunctional diterpene synthase converting geranylgeranyl diphosphate to copalyl diphosphate. This Selaginella moellendorffii (Spikemoss) protein is Copalyl diphosphate synthase 2 (CPS2).